The primary structure comprises 362 residues: MSGPIPNPGILDIAPYVGGEHSAPGVTRLLRLASNEGALGPSPRAVEAFRAVGPEIHRYPDGGSTRLREAIGHRFGLDPARVLCFNGSDEVLHLLAQAYAGPGGEVLYSRHGFLVYPIAARAAGATPVAAPERNLTTDVDALLARVSERTRIVYVANPNNPTGSYLPADALARLHAGLPPHVLLVIDAAYAEYVTANDYADGTALVARFDNVVMTRTFSKLFGLGGMRLGWAYCPPAVADALHRVRSPFNVSVAAQAAGVAALEDLEFQERSRALNEQSRTAFTGRVRALGLVVHPSVCNFVLVDFAATGRPAEEARQFLKARGILVRQMGAYGLPDCLRITMGLPAEMEEVADALGDWLKG.

Lys-220 carries the post-translational modification N6-(pyridoxal phosphate)lysine.

Belongs to the class-II pyridoxal-phosphate-dependent aminotransferase family. Histidinol-phosphate aminotransferase subfamily. In terms of assembly, homodimer. Pyridoxal 5'-phosphate serves as cofactor.

The catalysed reaction is L-histidinol phosphate + 2-oxoglutarate = 3-(imidazol-4-yl)-2-oxopropyl phosphate + L-glutamate. It participates in amino-acid biosynthesis; L-histidine biosynthesis; L-histidine from 5-phospho-alpha-D-ribose 1-diphosphate: step 7/9. In Rhodospirillum centenum (strain ATCC 51521 / SW), this protein is Histidinol-phosphate aminotransferase.